The primary structure comprises 437 residues: GTPase Obg (437 aa).

Residues 2–160 form the Obg domain; the sequence is SMFLDTAKIS…RELQLELKIL (159 aa). In terms of domain architecture, OBG-type G spans 161 to 338; that stretch reads ADVGLVGFPS…LMDATAELLA (178 aa). GTP contacts are provided by residues 167–174, 192–196, 214–217, 284–287, and 319–321; these read GFPSVGKS, FTTIV, DLPG, NKMD, and SSL. Residues serine 174 and threonine 194 each contribute to the Mg(2+) site. Positions 359 to 437 constitute an OCT domain; the sequence is GFNEDERPFE…IGNFEFEFVD (79 aa).

This sequence belongs to the TRAFAC class OBG-HflX-like GTPase superfamily. OBG GTPase family. As to quaternary structure, monomer. It depends on Mg(2+) as a cofactor.

Its subcellular location is the cytoplasm. An essential GTPase which binds GTP, GDP and possibly (p)ppGpp with moderate affinity, with high nucleotide exchange rates and a fairly low GTP hydrolysis rate. Plays a role in control of the cell cycle, stress response, ribosome biogenesis and in those bacteria that undergo differentiation, in morphogenesis control. This Streptococcus agalactiae serotype Ia (strain ATCC 27591 / A909 / CDC SS700) protein is GTPase Obg.